Here is a 400-residue protein sequence, read N- to C-terminus: Large envelope protein (400 aa).

At methionine 1 the chain carries N-acetylmethionine. Disordered regions lie at residues methionine 1–proline 53, valine 88–glutamine 118, and glycine 145–glycine 169. A lipid anchor (N-myristoyl glycine; by host) is attached at glycine 2. Residues glycine 2–alanine 119 form a pre-S1 region. The tract at residues glycine 2–asparagine 174 is pre-S. Topologically, residues glycine 2–glycine 181 are virion surface; in external conformation. Over glycine 2–arginine 253 the chain is Intravirion; in internal conformation. The N-linked (GlcNAc...) asparagine glycan is linked to tryptophan 4. The span at serine 96 to threonine 106 shows a compositional bias: polar residues. The interval methionine 120–asparagine 174 is pre-S2. Residues proline 155–serine 166 are compositionally biased toward low complexity. A helical membrane pass occupies residues phenylalanine 182–isoleucine 202. Over proline 203–arginine 253 the chain is Intravirion; in external conformation. Residues phenylalanine 254–tyrosine 274 traverse the membrane as a helical segment. The Virion surface segment spans residues glutamine 275 to serine 348. Asparagine 320 carries an N-linked (GlcNAc...) asparagine; by host glycan. A helical membrane pass occupies residues leucine 349 to isoleucine 369. The Intravirion segment spans residues tryptophan 370–tryptophan 375. The chain crosses the membrane as a helical span at residues glycine 376–valine 398. Residues tyrosine 399–isoleucine 400 lie on the Virion surface side of the membrane.

Belongs to the orthohepadnavirus major surface antigen family. In terms of assembly, in its internal form (Li-HBsAg), interacts with the capsid protein and with the isoform S. Interacts with host chaperone CANX. As to quaternary structure, associates with host chaperone CANX through its pre-S2 N glycan; this association may be essential for isoform M proper secretion. Interacts with isoform L. Interacts with the antigens of satellite virus HDV (HDVAgs); this interaction is required for encapsidation of HDV genomic RNA. Isoform M is N-terminally acetylated by host at a ratio of 90%, and N-glycosylated by host at the pre-S2 region. Post-translationally, myristoylated.

The protein localises to the virion membrane. Its function is as follows. The large envelope protein exists in two topological conformations, one which is termed 'external' or Le-HBsAg and the other 'internal' or Li-HBsAg. In its external conformation the protein attaches the virus to cell receptors and thereby initiating infection. This interaction determines the species specificity and liver tropism. This attachment induces virion internalization predominantly through caveolin-mediated endocytosis. The large envelope protein also assures fusion between virion membrane and endosomal membrane. In its internal conformation the protein plays a role in virion morphogenesis and mediates the contact with the nucleocapsid like a matrix protein. The middle envelope protein plays an important role in the budding of the virion. It is involved in the induction of budding in a nucleocapsid independent way. In this process the majority of envelope proteins bud to form subviral lipoprotein particles of 22 nm of diameter that do not contain a nucleocapsid. The protein is Large envelope protein of Hepatitis B virus genotype C subtype adr (strain Japan/adr4/1983) (HBV-C).